Here is a 614-residue protein sequence, read N- to C-terminus: MIKKATLLTAFSVTAFSAWAQDTSPDTLVVTANRFQQPRSAVLAPVTIVTRQDIERWQSTSVNDVLRRLPGVDIAQSGGAGQNSSIFIRGTNSSHVLVLIDGVRLNLAGVSGSADLSQFPVSLVQRIEYIRGPRSAIYGSDAIGGVVNIITTRDNPGTELTAGWGSNSYQNYDISTQQQLGENTRATLIGDYEYTKGFDVVAKGGTGMQAQPDRDGFLSKTLYGALEHTFSDRWSGFVRGYGYDNRTDYDAYYSPGSPLIDTRKLYSQSWDAGLRFNGERIQSQLVSSYSHSKDYNYDPHYGRYDTSATLDEMKQYNVQWTNSVVVGHGNVGAGVDWQKQTTTPGTGYVPEGYDQRNTGVYLTGLQQLGDFTLEAAARSDDNSQFGRHGTWQTSAGWEFIEGYRFIASYGTSYKAPNLGQLYGYYGNPNLNPEKSKQWEGAFEGLTAGVSWRISGYRNDINDMIDYDDHLQKYYNEGKARIKGIEATANFDTGPLTHTVSYDYVDARNAITDTPLPRRSKQMAKYQLDWDVYDFDWGVTYQYLGSRYDSDYSAYPYRTVKMGGVSLWDLTVAYPVTSHLTVRGKIANLFDKDYETVYGYQTAGREYTLSGSYTF.

An N-terminal signal peptide occupies residues M1–A20. Residues D26 to N33 carry the TonB box motif. The TBDR plug domain maps to P38–T152. Residues S85, N92, and V110–S111 contribute to the cyanocob(III)alamin site. Positions N155–F614 constitute a TBDR beta-barrel domain. 3 beta stranded membrane passes run T158–G165, Y169–Q178, and T184–T195. 4 residues coordinate Ca(2+): D199, Q211, D213, and D215. Beta stranded transmembrane passes span F217–E227 and D232–D248. The Ca(2+) site is built by Y249 and D250. Cyanocob(III)alamin is bound at residue A251. Residue D261 participates in Ca(2+) binding. 14 beta stranded membrane passes run R263 to N277, E279 to N296, T309 to V325, H328 to W337, Y353 to G369, F371 to D381, F385 to I400, Y403 to N417, K434 to E443, V449 to N458, Y473 to F490, P494 to A509, R517 to W529, and D535 to D550. T309 provides a ligand contact to cyanocob(III)alamin. Residue R517 participates in cyanocob(III)alamin binding. Y551 serves as a coordination point for cyanocob(III)alamin. The next 3 membrane-spanning stretches (beta stranded) occupy residues T558–A572, I585–V596, and A602–F614. Residues Y597–F614 carry the TonB C-terminal box motif.

It belongs to the TonB-dependent receptor family. BtuB (TC 1.B.14.3.1) subfamily.

The protein localises to the cell outer membrane. Involved in the active translocation of vitamin B12 (cyanocobalamin) across the outer membrane to the periplasmic space. It derives its energy for transport by interacting with the trans-periplasmic membrane protein TonB. The sequence is that of Vitamin B12 transporter BtuB from Salmonella choleraesuis (strain SC-B67).